The following is a 148-amino-acid chain: Large ribosomal subunit protein bL9 (148 aa).

It belongs to the bacterial ribosomal protein bL9 family.

Binds to the 23S rRNA. The sequence is that of Large ribosomal subunit protein bL9 from Alkaliphilus oremlandii (strain OhILAs) (Clostridium oremlandii (strain OhILAs)).